The following is a 461-amino-acid chain: Cysteine--tRNA ligase (461 aa).

Position 29 (cysteine 29) interacts with Zn(2+). The short motif at 31-41 (MTVYDFCHIGH) is the 'HIGH' region element. Zn(2+) contacts are provided by cysteine 210, histidine 235, and glutamate 239. Positions 267 to 271 (KMSKS) match the 'KMSKS' region motif. Lysine 270 lines the ATP pocket.

This sequence belongs to the class-I aminoacyl-tRNA synthetase family. Monomer. It depends on Zn(2+) as a cofactor.

Its subcellular location is the cytoplasm. It carries out the reaction tRNA(Cys) + L-cysteine + ATP = L-cysteinyl-tRNA(Cys) + AMP + diphosphate. This Azotobacter vinelandii (strain DJ / ATCC BAA-1303) protein is Cysteine--tRNA ligase.